A 547-amino-acid chain; its full sequence is Cdc42-interacting protein 4 (547 aa).

The segment at 1 to 117 (MDWGTELWDQ…EMKQERKMHF (117 aa)) is required for translocation to the plasma membrane in response to insulin, podosome formation and interaction with AKAP9 and microtubules. The F-BAR domain occupies 1–264 (MDWGTELWDQ…AAESVDAKND (264 aa)). The stretch at 67–259 (FSQQQSFVQL…EGMKVAAESV (193 aa)) forms a coiled coil. Positions 293–483 (RVPSDSSLGT…YTEFDEDFEE (191 aa)) are interaction with CDC42. Positions 293-547 (RVPSDSSLGT…PTSYLRVTLN (255 aa)) are interaction with PDE6G. The segment at 294–323 (VPSDSSLGTPDGRPELRAASSRSRAKRWPF) is disordered. Ser-296, Ser-298, and Ser-299 each carry phosphoserine. Positions 332–425 (TEDFSHLPPE…ESRVLSNRGD (94 aa)) form a coiled coil. The 78-residue stretch at 337–414 (HLPPEQQRKR…VQKYEAWLAE (78 aa)) folds into the REM-1 domain. The required for interaction with FASLG and localization to lysosomes stretch occupies residues 415 to 547 (AESRVLSNRG…PTSYLRVTLN (133 aa)). The disordered stretch occupies residues 420–485 (LSNRGDSLSR…EFDEDFEEPA (66 aa)). A Phosphoserine modification is found at Ser-426. The interaction with DNM2 and WASL stretch occupies residues 431–487 (TRPPDPPTTAPPDSSSSSNNSGSQDNKESSEEPPSEEGQDTPIYTEFDEDFEEPASP). The segment covering 441 to 451 (PPDSSSSSNNS) has biased composition (low complexity). An interaction with DNM1 and WASL region spans residues 476-547 (EFDEDFEEPA…PTSYLRVTLN (72 aa)). The tract at residues 484–547 (PASPIGQCVA…PTSYLRVTLN (64 aa)) is required for podosome formation. The region spanning 486–547 (SPIGQCVAIY…PTSYLRVTLN (62 aa)) is the SH3 domain. An interaction with WAS region spans residues 490–547 (QCVAIYHFEGSSEGTVSMSEGEDLSLMEEDKGDGWTRVRRKQGGEGYVPTSYLRVTLN). An interaction with ARHGAP17, DAAM1, DIAPH1 and DIAPH2 region spans residues 492–547 (VAIYHFEGSSEGTVSMSEGEDLSLMEEDKGDGWTRVRRKQGGEGYVPTSYLRVTLN).

This sequence belongs to the FNBP1 family. As to quaternary structure, homodimerizes, the dimers can polymerize end-to-end to form filamentous structures. Interacts specifically with GTP-bound CDC42 and RHOQ. Interacts with AKAP9, ARHGAP17, DAAM1, DIAPH1, DIAPH2, DNM1, DNM2, FASLG/FASL, GAPVD1, LYN, microtubules, SRC, WAS/WASP and WASL/N-WASP. Interacts with the ligand binding domain of the thyroid receptor (TR) in the presence of thyroid hormone. May interact with CTNNB1 and HD/HTT. Interacts with PDE6G. In terms of tissue distribution, expressed in adrenal gland, aorta, brain, heart, kidney, liver, skeletal muscle and spleen.

Its subcellular location is the cytoplasm. The protein resides in the cytoskeleton. It is found in the cell cortex. It localises to the lysosome. The protein localises to the golgi apparatus. Its subcellular location is the cell membrane. The protein resides in the cell projection. It is found in the phagocytic cup. Its function is as follows. Required to coordinate membrane tubulation with reorganization of the actin cytoskeleton during endocytosis. Also acts as a link between CDC42 signaling and regulation of the actin cytoskeleton. Binds to lipids such as phosphatidylinositol 4,5-bisphosphate and phosphatidylserine and promotes membrane invagination and the formation of tubules. Also enhances actin polymerization in the vicinity of membrane tubules by recruiting WASL/N-WASP which in turn activates the Arp2/3 complex. Actin polymerization and dynamin may promote the fission of membrane tubules to form endocytic vesicles. Required for the formation of podosomes, actin-rich adhesion structures specific to monocyte-derived cells. Required for translocation of GLUT4 to the plasma membrane in response to insulin signaling. May be required for the lysosomal retention of FASLG/FASL. In Rattus norvegicus (Rat), this protein is Cdc42-interacting protein 4 (Trip10).